The chain runs to 25 residues: Aurein-5.1 (25 aa).

This sequence belongs to the frog skin active peptide (FSAP) family. Aurein subfamily. As to expression, expressed by the skin dorsal glands.

It localises to the secreted. Has no antimicrobial or anticancer activity. The protein is Aurein-5.1 of Ranoidea aurea (Green and golden bell frog).